Consider the following 671-residue polypeptide: Solute carrier family 5 member 4 (671 aa).

Residues 1-38 lie on the Cytoplasmic side of the membrane; sequence MPAMGTALPRAMASTASVSTSTGSSELSSLSDNINNPA. Residues 39-59 traverse the membrane as a helical segment; it reads DISVIVIYFVVVMAVGVWAMV. The Extracellular segment spans residues 60 to 65; sequence KTNRST. A helical membrane pass occupies residues 66-86; that stretch reads VGGFFLAGRSMTWWPMGASLF. At 87 to 89 the chain is on the cytoplasmic side; the sequence is ASN. The chain crosses the membrane as a helical span at residues 90–110; sequence IGSGHFVGLAGTGAATGIAVT. At 111-116 the chain is on the extracellular side; sequence AFESHS. A helical membrane pass occupies residues 117-137; the sequence is FALLLVLGWFFVPIYIKAGVM. The Cytoplasmic portion of the chain corresponds to 138–159; the sequence is TMPEYLRKRFGGKRLQIYLSVL. A helical membrane pass occupies residues 160 to 180; it reads SLFICVILTISADIFSGAIFI. Position 181 (Lys-181) is a topological domain, extracellular. A helical transmembrane segment spans residues 182–202; the sequence is LALGLDLYLAIFILLAITAVF. At 203–218 the chain is on the cytoplasmic side; it reads TITGGLASVIYTDTLQ. Residues 219–239 form a helical membrane-spanning segment; the sequence is AIIMLVGSFILMIYAFVEVGG. At 240 to 288 the chain is on the extracellular side; the sequence is YESFTEKYMNAIPSVVEGDNLTISPKCYTPQPDSFHIFRDAVTGDIPWP. Residues 289–309 traverse the membrane as a helical segment; it reads GTAFGMPITALWYWCINQVIV. Residues 310-324 lie on the Cytoplasmic side of the membrane; it reads QRCLCGKNMSHVKAA. The helical transmembrane segment at 325 to 345 threads the bilayer; the sequence is CIVCGYLKLLPIFFMVMPGMI. Residues 346 to 378 lie on the Extracellular side of the membrane; that stretch reads SRILYTDMVACVVPSECVKQCGVDVGCTNYAYP. A helical transmembrane segment spans residues 379-399; the sequence is MLVLKLMPMGLRGLMLSVMLA. Residues 400–434 are Cytoplasmic-facing; it reads SLMSSLTSIFNSASTLFTMDLYTKIRKKASERELL. A helical membrane pass occupies residues 435–455; sequence IAGRLFVSVLIVTSILWVPIV. Topologically, residues 456 to 467 are extracellular; the sequence is EVSQGGQLIHYT. A helical transmembrane segment spans residues 468 to 488; that stretch reads EAISSYLGPPIAAVFLVAIFC. Over 489-494 the chain is Cytoplasmic; sequence KRVNEQ. A helical transmembrane segment spans residues 495-515; that stretch reads GAFWGLMVGLVLGLIRMIAEF. Residues 516-537 are Extracellular-facing; it reads SYGTGSCLAPSSCPKVICGVHY. A helical membrane pass occupies residues 538-558; it reads LYYAIILFFVSILVILGVSYL. Over 559-650 the chain is Cytoplasmic; the sequence is TKPIPDVHLY…DTSEKPFWRT (92 aa). Over residues 583-593 the composition is skewed to acidic residues; sequence DLDAEDREENE. Positions 583-604 are disordered; it reads DLDAEDREENEADARTEEDQTE. Basic and acidic residues predominate over residues 594–604; that stretch reads ADARTEEDQTE. Residues 651–671 form a helical membrane-spanning segment; sequence VVNVNVIVLLAVAAFFYGYFA.

The protein belongs to the sodium:solute symporter (SSF) (TC 2.A.21) family.

The protein resides in the cell membrane. Functionally, generates D-glucose-induced depolarization in a pH-dependent and Na(+)-independent manner, with activity in acidic conditions (pH 5) but not neutral conditions. The protein is Solute carrier family 5 member 4 of Rattus norvegicus (Rat).